A 377-amino-acid chain; its full sequence is Prostaglandin E synthase 2 (377 aa).

Residues 1-57 (MDPAARVVRALWPGGCALAWRLGGRPQPLLPTQSRAGFAGAAGGPSPVAAARKGSPR) lie on the Lumenal side of the membrane. The chain crosses the membrane as a helical span at residues 58 to 74 (LLGAAALALGGALGLYH). The Cytoplasmic segment spans residues 75–377 (TARWHLRAQD…RAITEASPAH (303 aa)). The region spanning 90-193 (SAAQLSLSSR…EIITYYPAMK (104 aa)) is the Glutaredoxin domain. Position 95 is a phosphoserine (Ser95). Glutathione contacts are provided by residues Val148 and 164–165 (DS). The GST C-terminal domain maps to 263–377 (YIVREGKFGA…RAITEASPAH (115 aa)).

This sequence belongs to the GST superfamily. Homodimer. May interact with CEBPB. Interacts with EXOSC10. Synthesized as a Golgi membrane-associated protein, and the proteolytic removal of the N-terminal hydrophobic domain leads to the formation of a mature cytosolic enzyme. In terms of tissue distribution, widely expressed. Expressed in the heart, including apex, inter-ventricular septum, both atria and ventricles, but not in the aorta. Also expressed in fetal heart. Detected in various regions of the brain: cerebellum; occipital, frontal and parietal lobes. Also expressed in the lymph nodes, skeletal muscle, kidney and trachea, but not in the thymus or lung. Overexpressed in colorectal cancer.

Its subcellular location is the golgi apparatus membrane. The protein resides in the cytoplasm. It is found in the perinuclear region. It carries out the reaction prostaglandin H2 = prostaglandin E2. The enzyme catalyses prostaglandin H2 = (12S)-hydroxy-(5Z,8E,10E)-heptadecatrienoate + malonaldehyde. The protein operates within lipid metabolism; prostaglandin biosynthesis. Its activity is regulated as follows. Isomerase activity is increased by sulfhydril compounds. Dithiothreitol (DTT) is most effective, followed by dihydrolipoic acid, glutathione (GSH) and 2-mercaptoethanol. Functionally, isomerase that catalyzes the conversion of PGH2 into the more stable prostaglandin E2 (PGE2) (in vitro). The biological function and the GSH-dependent property of PTGES2 is still under debate. In vivo, PTGES2 could form a complex with GSH and heme and would not participate in PGE2 synthesis but would catalyze the degradation of prostaglandin E2 H2 (PGH2) to 12(S)-hydroxy-5(Z),8(E),10(E)-heptadecatrienoic acid (HHT) and malondialdehyde (MDA). This is Prostaglandin E synthase 2 (PTGES2) from Homo sapiens (Human).